Consider the following 353-residue polypeptide: Guanine nucleotide-binding protein subunit alpha (353 aa).

A disordered region spans residues 1-26 (MGCGMSVEEKEGKARNEEIENQLKRD). A lipid anchor (N-myristoyl glycine) is attached at glycine 2. The S-palmitoyl cysteine moiety is linked to residue cysteine 3. Basic and acidic residues predominate over residues 7–26 (VEEKEGKARNEEIENQLKRD). The G-alpha domain maps to 32–353 (NEIKMLLLGA…QENLRLCGLI (322 aa)). Residues 35 to 48 (KMLLLGAGESGKST) are G1 motif. GTP-binding residues include glutamate 43, serine 44, glycine 45, lysine 46, serine 47, threonine 48, aspartate 150, leucine 175, threonine 181, glycine 203, asparagine 269, lysine 270, aspartate 272, and alanine 325. Position 47 (serine 47) interacts with Mg(2+). Residues 173 to 181 (DVLRSRVKT) are G2 motif. Mg(2+) is bound at residue threonine 181. The G3 motif stretch occupies residues 196–205 (YRMFDVGGQR). Residues 265–272 (ILFLNKID) form a G4 motif region. The interval 323 to 328 (TCATDT) is G5 motif.

It belongs to the G-alpha family. G(q) subfamily. G proteins are composed of 3 units; alpha, beta and gamma. The alpha chain contains the guanine nucleotide binding site. Requires Mg(2+) as cofactor.

In terms of biological role, guanine nucleotide-binding proteins (G proteins) are involved as modulators or transducers in various transmembrane signaling systems. The polypeptide is Guanine nucleotide-binding protein subunit alpha (SSG-1) (Sporothrix schenckii (strain ATCC 58251 / de Perez 2211183) (Rose-picker's disease fungus)).